Here is a 554-residue protein sequence, read N- to C-terminus: MRSKRFEALAKRPVNQDGFVKEWIEEGFIAMESPNDPKPSIKIVNGAVTELDGKPVSEFDLIDHFIARYGINLNRAEEVMAMDSVKLANMLCDPNVKRSEIVPLTTAMTPAKIVEVVSHMNVVEMMMAMQKMRARRTPSQQAHVTNVKDNPVQIAADAAEGAWRGFDEQETTVAVARYAPFNAIALLVGSQVGRPGVLTQCSLEEATELKLGMLGHTCYAETISVYGTEPVFTDGDDTPWSKGFLASSYASRGLKMRFTSGSGSEVQMGYAEGKSMLYLEARCIYITKAAGVQGLQNGSVSCIGVPSAVPSGIRAVLAENLICSSLDLECASSNDQTFTHSDMRRTARLLMQFLPGTDFISSGYSAVPNYDNMFAGSNEDAEDFDDYNVIQRDLKVDGGLRPVREEDVIAIRNKAARALQAVFAGMGLPPITDEEVEAATYAHGSKDMPERNIVEDIKFAQEIINKNRNGLEVVKALAQGGFTDVAQDMLNIQKAKLTGDYLHTSAIIVGDGQVLSAVNDVNDYAGPATGYRLQGERWEEIKNIPGALDPNEID.

This sequence belongs to the diol/glycerol dehydratase large subunit family. As to quaternary structure, the propanediol dehydratase enzyme is a heterotrimeric complex composed of a large (PduC), a medium (PduD) and a small (PduE) subunit. Requires adenosylcob(III)alamin as cofactor.

It localises to the bacterial microcompartment. It carries out the reaction propane-1,2-diol = propanal + H2O. It participates in polyol metabolism; 1,2-propanediol degradation. Its activity is regulated as follows. Inhibited by glycerol. In terms of biological role, part of the PduCDE complex that catalyzes the dehydration of 1,2-propanediol (1,2-PD) to propionaldehyde. Required for S.typhimurium growth on 1,2-PD as the sole carbon and energy source. This subunit is directly targeted to the BMC. The 1,2-PD-specific bacterial microcompartment (BMC) concentrates low levels of 1,2-PD catabolic enzymes, concentrates volatile reaction intermediates thus enhancing pathway flux and keeps the level of toxic, mutagenic propionaldehyde low. This Salmonella typhimurium (strain LT2 / SGSC1412 / ATCC 700720) protein is Propanediol dehydratase large subunit.